The following is a 157-amino-acid chain: Phosphopantetheine adenylyltransferase (157 aa).

Serine 8 is a substrate binding site. ATP is bound by residues serine 8–phenylalanine 9 and histidine 16. Substrate-binding residues include lysine 40, leucine 72, and arginine 86. Residues glycine 87–arginine 89, glutamate 97, and phenylalanine 121–serine 127 each bind ATP.

It belongs to the bacterial CoaD family. Homohexamer. Requires Mg(2+) as cofactor.

It localises to the cytoplasm. The catalysed reaction is (R)-4'-phosphopantetheine + ATP + H(+) = 3'-dephospho-CoA + diphosphate. It participates in cofactor biosynthesis; coenzyme A biosynthesis; CoA from (R)-pantothenate: step 4/5. In terms of biological role, reversibly transfers an adenylyl group from ATP to 4'-phosphopantetheine, yielding dephospho-CoA (dPCoA) and pyrophosphate. In Cutibacterium acnes (strain DSM 16379 / KPA171202) (Propionibacterium acnes), this protein is Phosphopantetheine adenylyltransferase.